A 377-amino-acid chain; its full sequence is Homoserine O-acetyltransferase (377 aa).

Positions 47–355 constitute an AB hydrolase-1 domain; sequence NAILICHALT…DYGHDAFLLE (309 aa). The active-site Nucleophile is serine 153. A substrate-binding site is contributed by arginine 222. Residues aspartate 316 and histidine 349 contribute to the active site. Position 350 (aspartate 350) interacts with substrate.

The protein belongs to the AB hydrolase superfamily. MetX family. Homodimer.

It is found in the cytoplasm. The catalysed reaction is L-homoserine + acetyl-CoA = O-acetyl-L-homoserine + CoA. The protein operates within amino-acid biosynthesis; L-methionine biosynthesis via de novo pathway; O-acetyl-L-homoserine from L-homoserine: step 1/1. Its function is as follows. Transfers an acetyl group from acetyl-CoA to L-homoserine, forming acetyl-L-homoserine. The protein is Homoserine O-acetyltransferase of Deferribacter desulfuricans (strain DSM 14783 / JCM 11476 / NBRC 101012 / SSM1).